Consider the following 231-residue polypeptide: Protein usf (231 aa).

The polypeptide is Protein usf (usf) (Aquifex pyrophilus).